Here is a 264-residue protein sequence, read N- to C-terminus: ATP synthase subunit a (264 aa).

A run of 5 helical transmembrane segments spans residues 39–59 (LDTL…FYII), 97–117 (VAPL…MDLV), 139–159 (TADP…VVFY), 205–225 (LFGN…LPWW), and 239–259 (LLVI…YISL).

Belongs to the ATPase A chain family. In terms of assembly, F-type ATPases have 2 components, CF(1) - the catalytic core - and CF(0) - the membrane proton channel. CF(1) has five subunits: alpha(3), beta(3), gamma(1), delta(1), epsilon(1). CF(0) has three main subunits: a(1), b(2) and c(9-12). The alpha and beta chains form an alternating ring which encloses part of the gamma chain. CF(1) is attached to CF(0) by a central stalk formed by the gamma and epsilon chains, while a peripheral stalk is formed by the delta and b chains.

Its subcellular location is the cell inner membrane. Key component of the proton channel; it plays a direct role in the translocation of protons across the membrane. In Coxiella burnetii (strain CbuG_Q212) (Coxiella burnetii (strain Q212)), this protein is ATP synthase subunit a.